Consider the following 549-residue polypeptide: Endoplasmic reticulum mannosyl-oligosaccharide 1,2-alpha-mannosidase (549 aa).

Residues 1-4 (MKNS) are Cytoplasmic-facing. The helical; Signal-anchor for type II membrane protein transmembrane segment at 5–24 (VGISIATIVAIIAAIYYVPW) threads the bilayer. Residues 25 to 354 (YEHFERKSPG…LLASGSTEGL (330 aa)) are Lumenal-facing. Residues N96, N155, and N224 are each glycosylated (N-linked (GlcNAc...) asparagine). C340 and C385 are joined by a disulfide. E399 acts as the Proton donor in catalysis. C468 and C471 form a disulfide bridge. A Ca(2+)-binding site is contributed by T525.

This sequence belongs to the glycosyl hydrolase 47 family. As to quaternary structure, homodimer. The cofactor is Ca(2+).

It is found in the endoplasmic reticulum membrane. It catalyses the reaction N(4)-(alpha-D-Man-(1-&gt;2)-alpha-D-Man-(1-&gt;2)-alpha-D-Man-(1-&gt;3)-[alpha-D-Man-(1-&gt;2)-alpha-D-Man-(1-&gt;3)-[alpha-D-Man-(1-&gt;2)-alpha-D-Man-(1-&gt;6)]-alpha-D-Man-(1-&gt;6)]-beta-D-Man-(1-&gt;4)-beta-D-GlcNAc-(1-&gt;4)-beta-D-GlcNAc)-L-asparaginyl-[protein] (N-glucan mannose isomer 9A1,2,3B1,2,3) + 4 H2O = N(4)-(alpha-D-Man-(1-&gt;3)-[alpha-D-Man-(1-&gt;3)-[alpha-D-Man-(1-&gt;6)]-alpha-D-Man-(1-&gt;6)]-beta-D-Man-(1-&gt;4)-beta-D-GlcNAc-(1-&gt;4)-beta-D-GlcNAc)-L-asparaginyl-[protein] (N-glucan mannose isomer 5A1,2) + 4 beta-D-mannose. It carries out the reaction N(4)-(alpha-D-Man-(1-&gt;2)-alpha-D-Man-(1-&gt;2)-alpha-D-Man-(1-&gt;3)-[alpha-D-Man-(1-&gt;3)-[alpha-D-Man-(1-&gt;2)-alpha-D-Man-(1-&gt;6)]-alpha-D-Man-(1-&gt;6)]-beta-D-Man-(1-&gt;4)-beta-D-GlcNAc-(1-&gt;4)-beta-D-GlcNAc)-L-asparaginyl-[protein] (N-glucan mannose isomer 8A1,2,3B1,3) + 3 H2O = N(4)-(alpha-D-Man-(1-&gt;3)-[alpha-D-Man-(1-&gt;3)-[alpha-D-Man-(1-&gt;6)]-alpha-D-Man-(1-&gt;6)]-beta-D-Man-(1-&gt;4)-beta-D-GlcNAc-(1-&gt;4)-beta-D-GlcNAc)-L-asparaginyl-[protein] (N-glucan mannose isomer 5A1,2) + 3 beta-D-mannose. It functions in the pathway protein modification; protein glycosylation. Its function is as follows. Involved in glycoprotein quality control as it is important for the targeting of misfolded glycoproteins for degradation. It primarily trims a single alpha-1,2-linked mannose residue from Man(9)GlcNAc(2) to produce Man(8)GlcNAc(2), but at high enzyme concentrations it further trims the carbohydrates to Man(5)GlcNAc(2). The sequence is that of Endoplasmic reticulum mannosyl-oligosaccharide 1,2-alpha-mannosidase (MNS1) from Saccharomyces cerevisiae (strain ATCC 204508 / S288c) (Baker's yeast).